The following is a 314-amino-acid chain: Probable cell division protein WhiA (314 aa).

Positions 277–311 (TLKELGEKMPSGAISKSGINHRLRKLNQLAEGYQQ) form a DNA-binding region, H-T-H motif.

The protein belongs to the WhiA family.

Its function is as follows. Involved in cell division and chromosome segregation. The chain is Probable cell division protein WhiA from Latilactobacillus sakei subsp. sakei (strain 23K) (Lactobacillus sakei subsp. sakei).